A 240-amino-acid polypeptide reads, in one-letter code: Splicing factor rtf2 (240 aa).

2 disordered regions span residues 1–22 and 181–240; these read MGNDGGSLPTRNELVKEPGKVP and SLNK…RVKI. A compositionally biased stretch (basic residues) spans 185–210; sequence ASKKSNKNGDKKRKHVSKSNSKHAKH. Basic and acidic residues-rich tracts occupy residues 211 to 224 and 231 to 240; these read ELRTNRMLDGENVK and DMERVKRVKI.

It belongs to the rtf2 family. Interacts with pcn1.

It localises to the nucleus. Putative splicing factor that is required for the correct splicing of a subset of pre-mRNAs. Required for the correct splicing of rtf1, a replication termination factor that mediates site-specific replication termination at replication barrier RTS1. The protein is Splicing factor rtf2 of Schizosaccharomyces pombe (strain 972 / ATCC 24843) (Fission yeast).